The sequence spans 284 residues: Gap junction beta-1 protein (284 aa).

Residues 1 to 22 (MNWTGLYTLLSGVNRHSTAIGR) are Cytoplasmic-facing. A helical membrane pass occupies residues 23–45 (VWLSVIFIFRIMVLVVAAESVWG). Topologically, residues 46-75 (DEKSSFICNTLQPGCNSVCYDHFFPISHVR) are extracellular. Residues 76–95 (LWSLQLILVSTPALLVAMHV) form a helical membrane-spanning segment. Over 96-130 (AHQQHIEKKMLRLEGHGDPLHLEEVKRHKVHISGT) the chain is Cytoplasmic. A helical transmembrane segment spans residues 131–153 (LWWTYVISVVFRLLFEAAFMYVF). Over 154–191 (YLLYPGYAMVRLVKCDAYPCPNTVDCFVSRPTEKTIFT) the chain is Extracellular. Residues 192–214 (VFMLAASGICIILNVAEVVYLIF) traverse the membrane as a helical segment. Over 215–284 (RACARRAQRR…AEKSDRCSAC (70 aa)) the chain is Cytoplasmic. Serine 233, serine 259, serine 267, and serine 278 each carry phosphoserine.

The protein belongs to the connexin family. Beta-type (group I) subfamily. As to quaternary structure, a connexon is composed of a hexamer of connexins. Interacts with CNST.

The protein localises to the cell membrane. The protein resides in the cell junction. It localises to the gap junction. In terms of biological role, one gap junction consists of a cluster of closely packed pairs of transmembrane channels, the connexons, through which materials of low MW diffuse from one cell to a neighboring cell. The chain is Gap junction beta-1 protein (GJB1) from Bos taurus (Bovine).